We begin with the raw amino-acid sequence, 161 residues long: UPF0225 protein HI_0277 (161 aa).

Belongs to the UPF0225 family.

This is UPF0225 protein HI_0277 from Haemophilus influenzae (strain ATCC 51907 / DSM 11121 / KW20 / Rd).